The primary structure comprises 365 residues: Cyclin-O protein B (365 aa).

The interval 22–64 (SGKRKRDSVYSPGDATPGDRGEGEPKCPSVGTKKRAKYSRHRK) is disordered. Residues 53–64 (TKKRAKYSRHRK) show a composition bias toward basic residues.

It belongs to the cyclin family.

Its subcellular location is the cytoplasm. In terms of biological role, specifically required for generation of multiciliated cells, possibly by promoting a cell cycle state compatible with centriole amplification and maturation. Acts downstream of mcidas to promote mother centriole amplification and maturation in preparation for apical docking. The protein is Cyclin-O protein B (ccno-b) of Xenopus laevis (African clawed frog).